Reading from the N-terminus, the 71-residue chain is Pro-MCH (71 aa).

The first 20 residues, 1 to 20 (AKMSLSSYILILTLVLFSQG), serve as a signal peptide directing secretion.

This sequence belongs to the melanin-concentrating hormone family.

It localises to the secreted. The sequence is that of Pro-MCH (PMCH) from Carlito syrichta (Philippine tarsier).